The sequence spans 213 residues: Ribulose-phosphate 3-epimerase (213 aa).

Ser-9 serves as a coordination point for substrate. His-34, Asp-36, and His-66 together coordinate a divalent metal cation. Residue Asp-36 is the Proton acceptor of the active site. Substrate contacts are provided by residues His-66, Gly-139 to Gly-142, Asp-166 to Gly-168, and Gly-186 to Ser-187. An a divalent metal cation-binding site is contributed by Asp-166. Asp-166 functions as the Proton donor in the catalytic mechanism.

This sequence belongs to the ribulose-phosphate 3-epimerase family. Co(2+) serves as cofactor. The cofactor is Fe(2+). Mn(2+) is required as a cofactor. Requires Zn(2+) as cofactor.

It catalyses the reaction D-ribulose 5-phosphate = D-xylulose 5-phosphate. It functions in the pathway carbohydrate degradation; pentose phosphate pathway; D-xylulose 5-phosphate from D-ribulose 5-phosphate (non-oxidative stage): step 1/1. In terms of biological role, catalyzes the reversible epimerization of D-ribulose 5-phosphate to D-xylulose 5-phosphate. This chain is Ribulose-phosphate 3-epimerase (RPE1), found in Encephalitozoon cuniculi (strain GB-M1) (Microsporidian parasite).